We begin with the raw amino-acid sequence, 334 residues long: Ornithine carbamoyltransferase (334 aa).

Residues 57 to 60, Gln-84, Arg-108, and 135 to 138 contribute to the carbamoyl phosphate site; these read STRT and HPTQ. Residues Asn-169, Asp-233, and 237 to 238 each bind L-ornithine; that span reads SM. Residues 275 to 276 and Arg-320 contribute to the carbamoyl phosphate site; that span reads CL.

Belongs to the aspartate/ornithine carbamoyltransferase superfamily. OTCase family.

It localises to the cytoplasm. It carries out the reaction carbamoyl phosphate + L-ornithine = L-citrulline + phosphate + H(+). It functions in the pathway amino-acid biosynthesis; L-arginine biosynthesis; L-arginine from L-ornithine and carbamoyl phosphate: step 1/3. Reversibly catalyzes the transfer of the carbamoyl group from carbamoyl phosphate (CP) to the N(epsilon) atom of ornithine (ORN) to produce L-citrulline. This is Ornithine carbamoyltransferase from Aeromonas salmonicida (strain A449).